The sequence spans 242 residues: 3-oxoacyl-[acyl-carrier-protein] reductase FabG (242 aa).

NADP(+)-binding positions include 10–13, threonine 35, 57–58, and asparagine 84; these read GSTR and NV. Serine 136 contacts substrate. Tyrosine 149 acts as the Proton acceptor in catalysis. NADP(+) is bound by residues 149 to 153 and isoleucine 182; that span reads YCAAK.

It belongs to the short-chain dehydrogenases/reductases (SDR) family. Homotetramer.

The enzyme catalyses a (3R)-hydroxyacyl-[ACP] + NADP(+) = a 3-oxoacyl-[ACP] + NADPH + H(+). It participates in lipid metabolism; fatty acid biosynthesis. In terms of biological role, catalyzes the NADPH-dependent reduction of beta-ketoacyl-ACP substrates to beta-hydroxyacyl-ACP products, the first reductive step in the elongation cycle of fatty acid biosynthesis. The polypeptide is 3-oxoacyl-[acyl-carrier-protein] reductase FabG (fabG) (Haemophilus influenzae (strain ATCC 51907 / DSM 11121 / KW20 / Rd)).